Consider the following 295-residue polypeptide: Elongation factor Ts (295 aa).

Residues 79–82 form an involved in Mg(2+) ion dislocation from EF-Tu region; the sequence is TDFV.

Belongs to the EF-Ts family.

The protein resides in the cytoplasm. In terms of biological role, associates with the EF-Tu.GDP complex and induces the exchange of GDP to GTP. It remains bound to the aminoacyl-tRNA.EF-Tu.GTP complex up to the GTP hydrolysis stage on the ribosome. In Mycoplasma mycoides subsp. mycoides SC (strain CCUG 32753 / NCTC 10114 / PG1), this protein is Elongation factor Ts.